The following is a 143-amino-acid chain: Transcriptional regulator MraZ (143 aa).

SpoVT-AbrB domains follow at residues 5-47 (THHP…PRAE) and 76-119 (TDEQ…NAER).

This sequence belongs to the MraZ family. Forms oligomers.

It is found in the cytoplasm. The protein localises to the nucleoid. This Saccharopolyspora erythraea (strain ATCC 11635 / DSM 40517 / JCM 4748 / NBRC 13426 / NCIMB 8594 / NRRL 2338) protein is Transcriptional regulator MraZ.